The chain runs to 215 residues: MATAEPETSTNPSNSEEKNEENEQQIVSLEDYIKHPLQNRWALWFFKNDKSKTWQANLRLISKFDTVEDFWALYNHIQLSSNLMSGCDYSLFKDGIEPMWEDERNKRGGRWLITLSKQQRRADLDRFWLETLLCLVGEAFDDHSDDVCGAVVNIRTKGDKIAIWTTDYENKDAIVHIGRVYKERLGVPPKVIIGYQSHADTATKSGSTTKNKFVV.

The segment covering 1-14 (MATAEPETSTNPSN) has biased composition (low complexity). Positions 1–23 (MATAEPETSTNPSNSEEKNEENE) are disordered. MRNA-binding positions include 54–55 (WQ), 100–101 (WE), 155–160 (RTKGDK), and 203–205 (TKS).

Belongs to the eukaryotic initiation factor 4E family. As to quaternary structure, interacts with eif4ebp3l. As to expression, expressed in all tissues examined, including gill, fin, heart, intestine, muscle, ovary and testis.

It is found in the cytoplasm. Its subcellular location is the nucleus. In terms of biological role, recognizes and binds the 7-methylguanosine (m7G)-containing mRNA cap during an early step in the initiation of protein synthesis and facilitates ribosome binding by inducing the unwinding of the mRNAs secondary structures. Also promotes export of a subset of mRNAs from the nucleus to the cytoplasm. The chain is Eukaryotic translation initiation factor 4E-1A from Danio rerio (Zebrafish).